Consider the following 574-residue polypeptide: Galectin-3-binding protein (574 aa).

Residues 1–18 (MALLWLLSVFLLVPGTQG) form the signal peptide. Residues 24–124 (MRLVNGASAS…HEKDAGVVCS (101 aa)) enclose the SRCR domain. Disulfide bonds link Cys49-Cys113, Cys62-Cys123, and Cys93-Cys103. Asn69, Asn96, Asn102, and Asn125 each carry an N-linked (GlcNAc...) asparagine glycan. The BTB domain maps to 153 to 221 (CDLFIQVTGQ…FYSRRIEVSM (69 aa)). One can recognise a BACK domain in the interval 260–360 (PLELYEYAQA…MLPQELFELQ (101 aa)). Asn362, Asn398, Asn540, and Asn569 each carry an N-linked (GlcNAc...) asparagine glycan.

As to quaternary structure, homodimers and homomultimers. The multimers form ring-like structures with a diameter of 30-40 nm. Binds LGALS1 and LGALS3. Binds ITGB1, COL4A1, COL5A1, COL6A1, FN1 and NID. The unglycosylated form interacts with PDE4DIP; this interaction, which is PDE4DIP isoform-specific, may connect a pericentrosomal complex to the gamma-tubulin ring complex (gamma-TuRC) to promote microtubule assembly and acetylation. As to expression, detected in thyroid (at protein level).

The protein localises to the secreted. The protein resides in the extracellular space. Its subcellular location is the extracellular matrix. Promotes integrin-mediated cell adhesion. May stimulate host defense against viruses and tumor cells. In Rattus norvegicus (Rat), this protein is Galectin-3-binding protein (Lgals3bp).